Here is a 248-residue protein sequence, read N- to C-terminus: PF03932 family protein CutC (248 aa).

The protein belongs to the CutC family. In terms of assembly, homodimer.

The protein localises to the cytoplasm. This Escherichia coli O127:H6 (strain E2348/69 / EPEC) protein is PF03932 family protein CutC.